The chain runs to 465 residues: Gamma-aminobutyric acid receptor subunit gamma-1 (465 aa).

The N-terminal stretch at 1–20 (MGSGKAFLFSPSLLWSQTRG) is a signal peptide. Residues 21-273 (VRLIFLLLTL…FDLSRRMGYF (253 aa)) lie on the Extracellular side of the membrane. N-linked (GlcNAc...) asparagine glycosylation is found at N50 and N127. An intrachain disulfide couples C188 to C202. A glycan (N-linked (GlcNAc...) asparagine) is linked at N245. Residues 274–294 (TIQTYIPCILTVVLSWVSFWI) traverse the membrane as a helical segment. The Cytoplasmic segment spans residues 295–300 (NKDAVP). Residues 301 to 320 (ARTSLGITTVLTMTTLSTIA) traverse the membrane as a helical segment. The Extracellular portion of the chain corresponds to 321-328 (RKSLPKVS). Residues 329-349 (YVTAMDLFVSVCFIFVFAALM) form a helical membrane-spanning segment. The Cytoplasmic portion of the chain corresponds to 350-444 (EYGTLHYFTS…RIAKIDSYSR (95 aa)). Residues 445–465 (IFFPTAFALFNLVYWVGYLYL) traverse the membrane as a helical segment.

The protein belongs to the ligand-gated ion channel (TC 1.A.9) family. Gamma-aminobutyric acid receptor (TC 1.A.9.5) subfamily. GABRG1 sub-subfamily. Heteropentamer, formed by a combination of alpha (GABRA1-6), beta (GABRB1-3), gamma (GABRG1-3), delta (GABRD), epsilon (GABRE), rho (GABRR1-3), pi (GABRP) and theta (GABRQ) chains, each subunit exhibiting distinct physiological and pharmacological properties. Post-translationally, may be palmitoylated. As to expression, expressed in brain.

The protein resides in the postsynaptic cell membrane. The protein localises to the cell membrane. The enzyme catalyses chloride(in) = chloride(out). Gamma subunit of the heteropentameric ligand-gated chloride channel gated by gamma-aminobutyric acid (GABA), a major inhibitory neurotransmitter in the brain. GABA-gated chloride channels, also named GABA(A) receptors (GABAAR), consist of five subunits arranged around a central pore and contain GABA active binding site(s) located at the alpha and beta subunit interface(s). When activated by GABA, GABAARs selectively allow the flow of chloride anions across the cell membrane down their electrochemical gradient. Chloride influx into the postsynaptic neuron following GABAAR opening decreases the neuron ability to generate a new action potential, thereby reducing nerve transmission. In Mus musculus (Mouse), this protein is Gamma-aminobutyric acid receptor subunit gamma-1.